Consider the following 263-residue polypeptide: Follistatin-related protein 3 (263 aa).

The N-terminal stretch at 1–26 is a signal peptide; the sequence is MRPGAPGPLWPLPWGALAWAVGFVSS. The 72-residue stretch at 36-107 folds into the TB domain; sequence GVCWLQQGQE…SCDGVECGPG (72 aa). 13 disulfide bridges follow: C38/C61, C48/C92, C62/C95, C99/C110, C104/C119, C121/C153, C125/C146, C135/C167, C171/C182, C176/C192, C195/C229, C200/C222, and C211/C243. N-linked (GlcNAc...) asparagine glycosylation is present at N73. The Follistatin-like 1 domain occupies 99–119; that stretch reads CDGVECGPGKACRMLGGRPRC. A Kazal-like 1 domain is found at 113 to 169; that stretch reads LGGRPRCECAPDCSGLPARLQVCGSDGATYRDECELRAARCRGHPDLSVMYRGRCRK. A Follistatin-like 2 domain is found at 170–193; it reads SCEHVVCPRPQSCVVDQTGSAHCV. A Kazal-like 2 domain is found at 189 to 245; sequence SAHCVVCRAAPCPVPSSPGQELCGNNNVTYISSCHMRQATCFLGRSIGVRHAGSCAG. N215 is a glycosylation site (N-linked (GlcNAc...) asparagine). The tract at residues 242–263 is disordered; the sequence is SCAGTPEEPPGGESAEEEENFV. At S255 the chain carries Phosphoserine; by FAM20C.

As to quaternary structure, interacts with INHBA and INHBB. Interacts with FN1. Interacts with ADAM12. Isoform 2 interacts with MLLT10; the interaction enhances MLLT10 in vitro transcriptional activity and self-association. Interacts with MSTN. As to expression, expressed in a wide range of tissues.

It localises to the secreted. The protein resides in the nucleus. Functionally, isoform 1 or the secreted form is a binding and antagonizing protein for members of the TGF-beta family, such as activin, BMP2 and MSTN. Inhibits activin A-, activin B-, BMP2- and MSDT-induced cellular signaling; more effective on activin A than on activin B. Involved in bone formation; inhibits osteoclast differentiation. Involved in hematopoiesis; involved in differentiation of hemopoietic progenitor cells, increases hematopoietic cell adhesion to fibronectin and seems to contribute to the adhesion of hematopoietic precursor cells to the bone marrow stroma. Isoform 2 or the nuclear form is probably involved in transcriptional regulation via interaction with MLLT10. The protein is Follistatin-related protein 3 (FSTL3) of Homo sapiens (Human).